A 59-amino-acid chain; its full sequence is Small EDRK-rich factor 2 (59 aa).

Composition is skewed to basic and acidic residues over residues 1–30 (MTRG…RDDG) and 50–59 (KANEKKEEPK). A disordered region spans residues 1–59 (MTRGNQRELARQKNMKKQSDSVKGKRRDDGLSAAARKQRDSEIMQQKQKKANEKKEEPK).

The protein belongs to the SERF family.

Positive regulator of amyloid protein aggregation and proteotoxicity. Induces conformational changes in amyloid proteins, such as HTT, driving them into compact formations preceding the formation of aggregates. This chain is Small EDRK-rich factor 2 (SERF2), found in Plecturocebus moloch (Dusky titi monkey).